We begin with the raw amino-acid sequence, 254 residues long: Pimeloyl-[acyl-carrier protein] methyl ester esterase (254 aa).

Substrate-binding positions include Trp-20, 80-81 (SL), and 141-145 (FLALQ). Ser-80 serves as the catalytic Nucleophile. Residues Asp-205 and His-233 contribute to the active site. His-233 serves as a coordination point for substrate.

Belongs to the AB hydrolase superfamily. Carboxylesterase BioH family. Monomer.

It localises to the cytoplasm. It carries out the reaction 6-carboxyhexanoyl-[ACP] methyl ester + H2O = 6-carboxyhexanoyl-[ACP] + methanol + H(+). Its pathway is cofactor biosynthesis; biotin biosynthesis. The physiological role of BioH is to remove the methyl group introduced by BioC when the pimeloyl moiety is complete. It allows to synthesize pimeloyl-ACP via the fatty acid synthetic pathway through the hydrolysis of the ester bonds of pimeloyl-ACP esters. In Methylococcus capsulatus (strain ATCC 33009 / NCIMB 11132 / Bath), this protein is Pimeloyl-[acyl-carrier protein] methyl ester esterase.